A 1124-amino-acid polypeptide reads, in one-letter code: DNA-directed RNA polymerase subunit Rpo2 (1124 aa).

Cysteine 1061, cysteine 1064, cysteine 1079, and histidine 1082 together coordinate Zn(2+).

The protein belongs to the RNA polymerase beta chain family. In terms of assembly, part of the 13-subunit RNA polymerase complex. Zn(2+) serves as cofactor.

The protein resides in the cytoplasm. It carries out the reaction RNA(n) + a ribonucleoside 5'-triphosphate = RNA(n+1) + diphosphate. Its function is as follows. DNA-dependent RNA polymerase (RNAP) catalyzes the transcription of DNA into RNA using the four ribonucleoside triphosphates as substrates. This subunit is involved in DNA promoter recognition. In Saccharolobus solfataricus (strain ATCC 35092 / DSM 1617 / JCM 11322 / P2) (Sulfolobus solfataricus), this protein is DNA-directed RNA polymerase subunit Rpo2.